A 304-amino-acid chain; its full sequence is Voltage-dependent anion channel-forming protein YneE (304 aa).

A run of 4 helical transmembrane segments spans residues 28–48, 50–70, 209–229, and 235–255; these read LLLN…YTML, IKFT…FLGF, AYTL…PFAL, and YMTP…DALA.

This sequence belongs to the anion channel-forming bestrophin (TC 1.A.46) family.

Its subcellular location is the cell membrane. This is Voltage-dependent anion channel-forming protein YneE (yneE) from Salmonella typhi.